The chain runs to 153 residues: Arginine repressor (153 aa).

This sequence belongs to the ArgR family.

Its subcellular location is the cytoplasm. Its pathway is amino-acid biosynthesis; L-arginine biosynthesis [regulation]. Functionally, regulates arginine biosynthesis genes. This is Arginine repressor from Actinobacillus pleuropneumoniae serotype 7 (strain AP76).